A 537-amino-acid chain; its full sequence is MMSRIEAYQSDIAVLMDPETVLLPDFISALSYAHELGRDWLLVSSSVEIPRFPFHWDETRHFWRQDNGKRVRFRELQKMISLRSLQSNSSASKMIMAWNNIDMPLHCGVLPPFLYQRGTHNQWIINEAMSCKRRFVFDATSTISSFFLGNAENIYNRSDNVSEPKTRNWEYVGNSHLGQLYGSLYSRSYTLPKLLKCNRRYIFVSASERSTDLSIPKGKSLGFRTREKISACITRTKSRSLKLDFVQKDETVPPLKFPFDLESLLPLVADKNRTVVLSVAGYSYKDMLMSWVCRLRRLKVPNFLVCALDDETYQFSILQGLPVFFDPYAPKNISFNDCHFGSKCFQRVTKVKSRTVLKILKLGYNVLLSDVDVYWFRNPLPLLQSFGPSVLAAQSDEYNTTAPINRPRRLNSGFYFARSDSPTIAAMEKVVKHAATSGLSEQPSFYDTLCGEGGAYRLGDDRCVEPETNLTVQFLDRELFPNGAYGDLWLKEDVRAECEKKHCFVLHNNWISGRLKKLERQMMKGLWEYDASMRMCV.

The short motif at 370–372 (DVD) is the DXD motif element.

The protein belongs to the glycosyltransferase 77 family.

Functionally, beta-arabinofuranosyltransferase that transfers specifically an arabinosyl residue from UDP-arabinofuranose to the monosaccharide galactose or beta-methyl-galactoside in vitro. Catalyzes the addition of a beta-arabinofuranose residue onto a beta-galactosyl residue of an Yariv-precipitable wall polymer in vivo. The chain is Beta-arabinofuranosyltransferase RAY1 from Arabidopsis thaliana (Mouse-ear cress).